We begin with the raw amino-acid sequence, 156 residues long: MGKNYEGHLVASGLKVGIVVGRFNEFITSKLLGGAQDGLIRHGADEGDIDVAWVPGAFEIPFAAKKMAESGRYDAVITLGTVIRGSTPHFDYVCNEVAKGVSSLALTTGIPVIFGVLTTDTIEQAVERAGTKAGNKGWEAASAAIEMANLAKQFEE.

5-amino-6-(D-ribitylamino)uracil contacts are provided by residues Phe-23, 57-59, and 81-83; these read AFE and TVI. Residue 86 to 87 coordinates (2S)-2-hydroxy-3-oxobutyl phosphate; it reads ST. His-89 serves as the catalytic Proton donor. Residue Phe-114 participates in 5-amino-6-(D-ribitylamino)uracil binding. Residue Arg-128 participates in (2S)-2-hydroxy-3-oxobutyl phosphate binding.

The protein belongs to the DMRL synthase family. As to quaternary structure, forms an icosahedral capsid composed of 60 subunits, arranged as a dodecamer of pentamers.

It catalyses the reaction (2S)-2-hydroxy-3-oxobutyl phosphate + 5-amino-6-(D-ribitylamino)uracil = 6,7-dimethyl-8-(1-D-ribityl)lumazine + phosphate + 2 H2O + H(+). It functions in the pathway cofactor biosynthesis; riboflavin biosynthesis; riboflavin from 2-hydroxy-3-oxobutyl phosphate and 5-amino-6-(D-ribitylamino)uracil: step 1/2. Catalyzes the formation of 6,7-dimethyl-8-ribityllumazine by condensation of 5-amino-6-(D-ribitylamino)uracil with 3,4-dihydroxy-2-butanone 4-phosphate. This is the penultimate step in the biosynthesis of riboflavin. The sequence is that of 6,7-dimethyl-8-ribityllumazine synthase from Shouchella clausii (strain KSM-K16) (Alkalihalobacillus clausii).